The primary structure comprises 678 residues: NADPH--cytochrome P450 reductase (678 aa).

Position 2 is an N-acetylglycine (G2). Over 2–22 the chain is Lumenal; it reads GDSHEDTSATVPEAVAEEVSL. A helical membrane pass occupies residues 23 to 43; the sequence is FSTTDIVLFSLIVGVLTYWFI. The Cytoplasmic portion of the chain corresponds to 44–678; that stretch reads FKKKKEEIPE…KGRYSLDVWS (635 aa). Residues 80–224 form the Flavodoxin-like domain; sequence IIVFYGSQTG…DFITWREQFW (145 aa). FMN is bound by residues 86 to 91, 138 to 141, 173 to 182, and D208; these read SQTGTA, ATYG, and LGNKTYEHFN. In terms of domain architecture, FAD-binding FR-type spans 279–521; the sequence is KNPFLAAVTT…FVRKSQFRLP (243 aa). Residue R298 participates in NADP(+) binding. FAD is bound by residues R424, 454-457, 472-474, Y478, and 488-491; these read RYYS, CAV, and GVAT. NADP(+) is bound by residues T535, 596-597, 602-606, and D639; these read SR and KVYVQ. W677 contacts FAD.

Belongs to the NADPH--cytochrome P450 reductase family. The protein in the N-terminal section; belongs to the flavodoxin family. This sequence in the C-terminal section; belongs to the flavoprotein pyridine nucleotide cytochrome reductase family. FAD is required as a cofactor. FMN serves as cofactor.

It localises to the endoplasmic reticulum membrane. The catalysed reaction is 2 oxidized [cytochrome P450] + NADPH = 2 reduced [cytochrome P450] + NADP(+) + H(+). Its function is as follows. This enzyme is required for electron transfer from NADP to cytochrome P450 in microsomes. It can also provide electron transfer to heme oxygenase and cytochrome B5. The sequence is that of NADPH--cytochrome P450 reductase from Mus musculus (Mouse).